A 331-amino-acid polypeptide reads, in one-letter code: DNA-directed RNA polymerase subunit alpha (331 aa).

The segment at 1 to 233 is alpha N-terminal domain (alpha-NTD); sequence MVREKVTVST…DLFIPFLHAE (233 aa). Residues 265-331 form an alpha C-terminal domain (alpha-CTD) region; that stretch reads KEIELKYIFI…GILEKHFTID (67 aa).

This sequence belongs to the RNA polymerase alpha chain family. In terms of assembly, in plastids the minimal PEP RNA polymerase catalytic core is composed of four subunits: alpha, beta, beta', and beta''. When a (nuclear-encoded) sigma factor is associated with the core the holoenzyme is formed, which can initiate transcription.

The protein localises to the plastid. It localises to the chloroplast. The catalysed reaction is RNA(n) + a ribonucleoside 5'-triphosphate = RNA(n+1) + diphosphate. Its function is as follows. DNA-dependent RNA polymerase catalyzes the transcription of DNA into RNA using the four ribonucleoside triphosphates as substrates. This chain is DNA-directed RNA polymerase subunit alpha, found in Vitis vinifera (Grape).